The following is a 146-amino-acid chain: Ribonuclease H (146 aa).

The region spanning 4–145 (ELNKVVIYTD…ADILARSQIS (142 aa)) is the RNase H type-1 domain. Mg(2+) is bound by residues Asp-13, Glu-51, Asp-73, and Asp-137.

This sequence belongs to the RNase H family. As to quaternary structure, monomer. It depends on Mg(2+) as a cofactor.

The protein localises to the cytoplasm. The enzyme catalyses Endonucleolytic cleavage to 5'-phosphomonoester.. In terms of biological role, endonuclease that specifically degrades the RNA of RNA-DNA hybrids. The protein is Ribonuclease H of Ehrlichia canis (strain Jake).